The chain runs to 835 residues: Ribonuclease R (835 aa).

The 327-residue stretch at 267-593 (RVDLRELPLV…LLHRAIKYLI (327 aa)) folds into the RNB domain. The region spanning 652 to 733 (GDELEGVIAN…DDKQIDFELV (82 aa)) is the S1 motif domain. The span at 739–754 (LRGEGKTAKKRAAEAK) shows a compositional bias: basic and acidic residues. Residues 739 to 835 (LRGEGKTAKK…KTKRTKQDAQ (97 aa)) are disordered. Over residues 755–764 (RKAKEKKRAA) the composition is skewed to basic residues. Residues 765 to 777 (TRSSSKESATARA) are compositionally biased toward low complexity. Positions 783 to 793 (PTKRPEQTDSG) are enriched in basic and acidic residues. Positions 809 to 829 (KPKVKKAHKKKPHSKPKKTKR) are enriched in basic residues.

The protein belongs to the RNR ribonuclease family. RNase R subfamily.

It is found in the cytoplasm. The catalysed reaction is Exonucleolytic cleavage in the 3'- to 5'-direction to yield nucleoside 5'-phosphates.. Its function is as follows. 3'-5' exoribonuclease that releases 5'-nucleoside monophosphates and is involved in maturation of structured RNAs. In Vibrio parahaemolyticus serotype O3:K6 (strain RIMD 2210633), this protein is Ribonuclease R.